Consider the following 537-residue polypeptide: Probable metalloreductase AIM14 (537 aa).

A run of 7 helical transmembrane segments spans residues 20 to 40 (GFFIFALTIIQTIFFLQVKFI), 58 to 78 (ITNPPIWLMVTVWLLIVIFTG), 95 to 112 (RYGRMAYCLIPLNIYLVL), 133 to 155 (KWTSRIIVFCSTIHAAGYVYKWI), 167 to 187 (FLNLLGVVVFVFLVVLAIISI), 194 to 216 (VYSTFYLIHNVTAWSMVILITFH), and 221 to 238 (VTVFAVISLILLGYQLYL). Residues 97–213 (GRMAYCLIPL…VTAWSMVILI (117 aa)) enclose the Ferric oxidoreductase domain. Positions 187–363 (IRPFRRKVYS…GGSGISLGLP (177 aa)) constitute an FAD-binding FR-type domain. A disordered region spans residues 432-475 (EEQGHGLLNNDNENGIELQNMPKTNEESSEANSTNSKNNKDNQE).

The protein belongs to the ferric reductase (FRE) family. AIM14 subfamily.

The protein resides in the membrane. In terms of biological role, probable cell surface metalloreductase. May be involved in iron or copper homeostasis. This Candida dubliniensis (strain CD36 / ATCC MYA-646 / CBS 7987 / NCPF 3949 / NRRL Y-17841) (Yeast) protein is Probable metalloreductase AIM14 (AIM14).